We begin with the raw amino-acid sequence, 253 residues long: Ribonuclease HII (253 aa).

Positions 70–253 (NLIAGIDEVG…KSFEPIKSML (184 aa)) constitute an RNase H type-2 domain. A divalent metal cation is bound by residues Asp-76, Glu-77, and Asp-168.

It belongs to the RNase HII family. It depends on Mn(2+) as a cofactor. Mg(2+) is required as a cofactor.

It localises to the cytoplasm. The enzyme catalyses Endonucleolytic cleavage to 5'-phosphomonoester.. Endonuclease that specifically degrades the RNA of RNA-DNA hybrids. This chain is Ribonuclease HII, found in Streptococcus agalactiae serotype III (strain NEM316).